A 95-amino-acid chain; its full sequence is Integration host factor subunit beta (95 aa).

It belongs to the bacterial histone-like protein family. As to quaternary structure, heterodimer of an alpha and a beta chain.

Its function is as follows. This protein is one of the two subunits of integration host factor, a specific DNA-binding protein that functions in genetic recombination as well as in transcriptional and translational control. The chain is Integration host factor subunit beta from Erwinia tasmaniensis (strain DSM 17950 / CFBP 7177 / CIP 109463 / NCPPB 4357 / Et1/99).